The following is a 639-amino-acid chain: Muscarinic acetylcholine receptor M3 (639 aa).

Residues 1-115 (MLTHYQLCFQ…DPLGGHAVWQ (115 aa)) lie on the Extracellular side of the membrane. N-linked (GlcNAc...) asparagine glycosylation is found at asparagine 16, asparagine 44, asparagine 45, asparagine 54, asparagine 97, and asparagine 101. A helical membrane pass occupies residues 116-139 (VVLIAFLTGIIALVTIIGNILVIV). Topologically, residues 140–152 (SFKVNKQLKTVNN) are cytoplasmic. Residues 153–173 (YFLLSLACADLIIGVISMNLF) form a helical membrane-spanning segment. Residues 174–190 (TTYIIMGHWALGNLACD) are Extracellular-facing. The cysteines at positions 189 and 269 are disulfide-linked. A helical transmembrane segment spans residues 191 to 212 (LWLSIDYVASNASVMNLLVISF). Residues 213-232 (DRYFSITRPLTYRAKRTTKR) lie on the Cytoplasmic side of the membrane. The chain crosses the membrane as a helical span at residues 233–255 (AGVMIGLAWIISFVLWAPAILFW). The Extracellular portion of the chain corresponds to 256-277 (QYFVGKRTVPLDECFIQFLSEP). Residues 278-300 (IITFGTAIAAFYLPVTIMSILYW) traverse the membrane as a helical segment. The Cytoplasmic portion of the chain corresponds to 301–542 (RIYKETEKRT…LIKEKKAAQT (242 aa)). Disordered regions lie at residues 370–404 (PNTDQGDQEHSSSDSWNNNDAAASLENSASSDEED) and 431–471 (LPSS…GGSF). Residues 382 to 393 (SDSWNNNDAAAS) are compositionally biased toward low complexity. The span at 443–454 (ELQKSDTDSQEK) shows a compositional bias: basic and acidic residues. Residues 543 to 563 (LSAILFAFIITWTPYNIMVLV) traverse the membrane as a helical segment. Residues 564–576 (NTFCDCVPKTVWN) are Extracellular-facing. The chain crosses the membrane as a helical span at residues 577-596 (LGYWLCYINSTVNPVCYALC). The Cytoplasmic segment spans residues 597 to 639 (NKMFRNTFKMLLLCQCDKRKRRKQQYQQRQSVIFHKRIPREAS).

It belongs to the G-protein coupled receptor 1 family. Muscarinic acetylcholine receptor subfamily. CHRM3 sub-subfamily. Brain, heart atria, and ventricle.

The protein resides in the cell membrane. The protein localises to the postsynaptic cell membrane. Functionally, the muscarinic acetylcholine receptor mediates various cellular responses, including inhibition of adenylate cyclase, breakdown of phosphoinositides and modulation of potassium channels through the action of G proteins. Primary transducing effect is Pi turnover. This chain is Muscarinic acetylcholine receptor M3 (CHRM3), found in Gallus gallus (Chicken).